The sequence spans 306 residues: Light-independent protochlorophyllide reductase iron-sulfur ATP-binding protein (306 aa).

The disordered stretch occupies residues 1–31 (MREAAGLEARGLKSPPILKGQDGEGSLQVHQ). ATP-binding positions include 50 to 55 (GIGKST) and Lys79. Position 54 (Ser54) interacts with Mg(2+). [4Fe-4S] cluster-binding residues include Cys135 and Cys169. 220–221 (NR) serves as a coordination point for ATP.

It belongs to the NifH/BchL/ChlL family. Homodimer. Protochlorophyllide reductase is composed of three subunits; BchL, BchN and BchB. [4Fe-4S] cluster serves as cofactor.

It catalyses the reaction chlorophyllide a + oxidized 2[4Fe-4S]-[ferredoxin] + 2 ADP + 2 phosphate = protochlorophyllide a + reduced 2[4Fe-4S]-[ferredoxin] + 2 ATP + 2 H2O. The protein operates within porphyrin-containing compound metabolism; bacteriochlorophyll biosynthesis (light-independent). Its function is as follows. Component of the dark-operative protochlorophyllide reductase (DPOR) that uses Mg-ATP and reduced ferredoxin to reduce ring D of protochlorophyllide (Pchlide) to form chlorophyllide a (Chlide). This reaction is light-independent. The L component serves as a unique electron donor to the NB-component of the complex, and binds Mg-ATP. This is Light-independent protochlorophyllide reductase iron-sulfur ATP-binding protein from Jannaschia sp. (strain CCS1).